Consider the following 156-residue polypeptide: Ecotin (156 aa).

The N-terminal stretch at 1-19 (MKALLIAAGVAALSSTAMA) is a signal peptide. An intrachain disulfide couples cysteine 65 to cysteine 102.

Belongs to the protease inhibitor I11 (ecotin) family. In terms of assembly, homodimer.

It localises to the periplasm. In terms of biological role, general inhibitor of family S1 serine proteases. This is Ecotin from Pseudomonas aeruginosa (strain ATCC 15692 / DSM 22644 / CIP 104116 / JCM 14847 / LMG 12228 / 1C / PRS 101 / PAO1).